A 531-amino-acid polypeptide reads, in one-letter code: Fatty acid--[acyl-carrier-protein] ligase MmaC (531 aa).

T169 provides a ligand contact to Mg(2+). Positions 218, 308, and 312 each coordinate ATP. Residue E313 coordinates Mg(2+). Residue D403 coordinates ATP.

It belongs to the ATP-dependent AMP-binding enzyme family. Mg(2+) serves as cofactor.

It carries out the reaction a (2E)-enoyl fatty acid + holo-[ACP] + ATP = a (2E)-enoyl-[ACP] + AMP + diphosphate. The enzyme catalyses a (2E)-enoyl fatty acid + ATP + H(+) = a (2E)-2-fatty-enoyl-AMP + diphosphate. It catalyses the reaction a (2E)-2-fatty-enoyl-AMP + holo-[ACP] = a (2E)-enoyl-[ACP] + AMP + H(+). The catalysed reaction is (2E)-decenoate + holo-[ACP] + ATP = (2E)-decenoyl-[ACP] + AMP + diphosphate. It carries out the reaction a (3R)-3-isocyanyl-fatty acid + holo-[ACP] + ATP = a (3R)-3-isocyanyl-fatty acyl-[ACP] + AMP + diphosphate. The enzyme catalyses a (3R)-3-isocyanyl-fatty acid + ATP + H(+) = a (3R)-3-isocyanyl-fatty acyl-AMP + diphosphate. It catalyses the reaction a (3R)-3-isocyanyl-fatty acyl-AMP + holo-[ACP] = a (3R)-3-isocyanyl-fatty acyl-[ACP] + AMP + H(+). In terms of biological role, acyl:acyl-carrier protein ligase involved in the biosynthesis of a unique class of isonitrile lipopeptides (INLPs) that seem to play a role in metal acquisition in M.marinum. Acts twice during the INLP pathway, catalyzing the activation of (2E)-2-decenoate as well as probably the corresponding (3R)-3-isocyanyl-fatty acid as acyl-adenylates (acyl-AMP), and then the acyl transfer to the dedicated acyl-carrier protein MmaB. The polypeptide is Fatty acid--[acyl-carrier-protein] ligase MmaC (Mycobacterium marinum (strain ATCC BAA-535 / M)).